Here is a 779-residue protein sequence, read N- to C-terminus: MNNSLENTISFEEYIRVKARSVPQHRMKEFLDSLASKGPEALQEFQQTATTTMVYQQGGNCIYTDSTEVAGSLLELACPVTTSVQPQTQPEQQIQVQQPQQVQVQVQVQQSPQQVSAQQLSPQLTVHQPAEQPIHVQVQIQGQAAQPAAPSIQTPSLQSPSPSQLQAAQIQVQHMQAAQQIQAPEIPEEHIPHQQIQAQLVAGQSLAGGQQIQIQTVGALSPPPSQQGSPREGERRVGTASVLQPVKKRKVDMPITVSYAISGQPVATVLAIPQGQQQSYVSLRPDLLTVDSAHLYSATGTITSPTGETWTIPVYSAQPRGDPQQQSITHIAIPQEAYNAVHVSGSPTALAAVKLEDDKEKMVGTTSVVKNSHEEVVQTLANSLFPAQFMNGNIHIPVAVQAVAGTYQNTAQTVHIWDPQQQPQQQTPQEQTPPPPQQQQQQQLQVTCSAQTVQVAEVEPQSQPQPSPELLLPNSLKPEEGLEVWKNWAQTKNAELEKDAQNRLAPIGRRQLLRFQEDLISSAVAELNYGLCLMTREARNGEGEPYDPDVLYYIFLCIQKYLFENGRVDDIFSDLYYVRFTEWLHEVLKDVQPRVTPLGYVLPSHVTEEMLWECKQLGAHSPSTLLTTLMFFNTKYFLLKTVDQHMKLAFSKVLRQTKKNPSNPKDKSTSIRYLKALGIHQTGQKVTDDMYAEQTENPENPLRCPIKLYDFYLFKCPQSVKGRNDTFYLTPEPVVAPNSPIWYSVQPISREQMGQMLTRILVIREIQEAIAVASASTMH.

At M1 the chain carries N-acetylmethionine. In terms of domain architecture, CARD spans 6–48; sequence ENTISFEEYIRVKARSVPQHRMKEFLDSLASKGPEALQEFQQT. Disordered regions lie at residues 141–163 and 219–242; these read QGQA…PSPS and ALSP…TASV. Phosphoserine is present on S346. Residues K354 and K359 each participate in a glycyl lysine isopeptide (Lys-Gly) (interchain with G-Cter in SUMO2) cross-link. Residues 420–430 show a composition bias toward low complexity; sequence QQQPQQQTPQE. The segment at 420–443 is disordered; the sequence is QQQPQQQTPQEQTPPPPQQQQQQQ. Position 467 is a phosphoserine (S467).

Its subcellular location is the nucleus. It is found in the cytoplasm. The protein localises to the cell membrane. In terms of biological role, transcriptional regulator that acts as a mediator of the integrated stress response (ISR) through transcriptional control of protein homeostasis under conditions of ER stress. Controls the outcome of the unfolded protein response (UPR), an ER-stress response pathway that either promotes recovery of ER homeostasis and cell survival, or triggers the terminal UPR which elicits programmed cell death when ER stress is prolonged and unresolved. ER stress induces QRICH1 translation by a ribosome translation re-initiation mechanism in response to EIF2S1/eIF-2-alpha phosphorylation, and stress-induced QRICH1 regulates a transcriptional program associated with protein translation, protein secretion-mediated proteotoxicity and cell death during the terminal UPR. May cooperate with ATF4 transcription factor signaling to regulate ER homeostasis which is critical for cell viability. Up-regulates CASP3/caspase-3 activity in epithelial cells under ER stress. Central regulator of proteotoxicity associated with ER stress-mediated inflammatory diseases in the intestines and liver. Involved in chondrocyte hypertrophy, a process required for normal longitudinal bone growth. This chain is Transcriptional regulator QRICH1 (QRICH1), found in Bos taurus (Bovine).